Reading from the N-terminus, the 431-residue chain is Polygalacturonase ADPG1 (431 aa).

The signal sequence occupies residues 1-23 (MARCCRHLAVFLCVLLMLSLCKA). PbH1 repeat units follow at residues 223–249 (CNKVEVSNVEITAPGDSPNTDGIHITN) and 250–271 (TQNIRVSNSDIGTGDDCISIED). The active-site Proton donor is the Asp-264. Residue His-287 is part of the active site. PbH1 repeat units lie at residues 303–324 (VSGINVDGAKFSESDNGVRIKT), 332–353 (AKNIKFQNIRMENVKNPIIIDQ), and 398–420 (CQGIVLENVKIKGGTASCKNANV).

The protein belongs to the glycosyl hydrolase 28 family. As to expression, expressed in flower buds and siliques, in the dehiscence zone of anthers (stomium cells) and maturing siliques. Expressed in stigma during pollen tube growth. Not expressed in seeds or in the floral part or leaf abscission zone but found at the junction between the seed and the funiculus at the site of seed abscission.

Its subcellular location is the secreted. The protein resides in the cell wall. The protein localises to the cytoplasm. The enzyme catalyses (1,4-alpha-D-galacturonosyl)n+m + H2O = (1,4-alpha-D-galacturonosyl)n + (1,4-alpha-D-galacturonosyl)m.. Functionally, polygalacturonase involved in cell separation in the final stages of pod shatter and in anther dehiscence. Not involved in floral organ abscission. The chain is Polygalacturonase ADPG1 (ADPG1) from Arabidopsis thaliana (Mouse-ear cress).